Reading from the N-terminus, the 117-residue chain is ORF2 protein (117 aa).

Residues 43 to 104 (NLGRPPAPQP…AGDGGDGELA (62 aa)) are disordered. The segment covering 79–98 (GTGGDAAGGEAGGSRGAGDG) has biased composition (gly residues).

This chain is ORF2 protein, found in Homo sapiens (Human).